The chain runs to 219 residues: Charged multivesicular body protein 5 (219 aa).

Residues 1 to 10 (MNRLFGKAKP) show a composition bias toward basic residues. The tract at residues 1-21 (MNRLFGKAKPKAPPPSLTDCI) is disordered. Lysine 7 is lipidated: (Microbial infection) N6-stearoyl lysine. Residues 26 to 179 (SRAESIDKKI…LGDELLADED (154 aa)) are a coiled coil. Serine 86 is subject to Phosphoserine. Positions 121–158 (KQVKIDQIEDLQDQLEDMMEDANEIQEALSRSYGTPEL) are interaction with VTA1. Residues 188–219 (SAPAIPEGVPTDTKNKDGVLVDEFGLPQIPAS) are disordered.

It belongs to the SNF7 family. In terms of assembly, probable peripherally associated component of the endosomal sorting required for transport complex III (ESCRT-III). ESCRT-III components are thought to multimerize to form a flat lattice on the perimeter membrane of the endosome. Several assembly forms of ESCRT-III may exist that interact and act sequentially. Interacts with VTA1; the interaction involves soluble CHMP5. Interacts with CHMP2A. Interacts with NOD2. Interacts with BROX. Post-translationally, (Microbial infection) Stearoylated By S.flexneri N-epsilon-fatty acyltransferase IcsB, promoting S.flexneri evasion of autophagy. In terms of processing, ISGylated. Isgylation inhibits its interaction with VTA1.

Its subcellular location is the cytoplasm. The protein resides in the cytosol. It is found in the endosome membrane. It localises to the midbody. Its function is as follows. Probable peripherally associated component of the endosomal sorting required for transport complex III (ESCRT-III) which is involved in multivesicular bodies (MVBs) formation and sorting of endosomal cargo proteins into MVBs. MVBs contain intraluminal vesicles (ILVs) that are generated by invagination and scission from the limiting membrane of the endosome and mostly are delivered to lysosomes enabling degradation of membrane proteins, such as stimulated growth factor receptors, lysosomal enzymes and lipids. The MVB pathway appears to require the sequential function of ESCRT-O, -I,-II and -III complexes. ESCRT-III proteins mostly dissociate from the invaginating membrane before the ILV is released. The ESCRT machinery also functions in topologically equivalent membrane fission events, such as the terminal stages of cytokinesis and the budding of enveloped viruses (HIV-1 and other lentiviruses). ESCRT-III proteins are believed to mediate the necessary vesicle extrusion and/or membrane fission activities, possibly in conjunction with the AAA ATPase VPS4. Involved in HIV-1 p6- and p9-dependent virus release. The protein is Charged multivesicular body protein 5 (CHMP5) of Homo sapiens (Human).